Here is a 451-residue protein sequence, read N- to C-terminus: D-ribitol-5-phosphate cytidylyltransferase (451 aa).

A disordered region spans residues 1 to 29; it reads MEAGPPGSARPAEPGPCLSGQRGADHTAS.

The protein belongs to the IspD/TarI cytidylyltransferase family. IspD subfamily. In terms of assembly, homodimer. Ubiquitously expressed, with high expression in brain.

The protein localises to the cytoplasm. It localises to the cytosol. It carries out the reaction D-ribitol 5-phosphate + CTP + H(+) = CDP-L-ribitol + diphosphate. The catalysed reaction is D-ribose 5-phosphate + CTP + H(+) = CDP-D-ribose + diphosphate. It catalyses the reaction D-ribulose 5-phosphate + CTP + H(+) = CDP-D-ribulose + diphosphate. The protein operates within protein modification; protein glycosylation. Cytidylyltransferase required for protein O-linked mannosylation. Catalyzes the formation of CDP-ribitol nucleotide sugar from D-ribitol 5-phosphate. CDP-ribitol is a substrate of FKTN during the biosynthesis of the phosphorylated O-mannosyl trisaccharide (N-acetylgalactosamine-beta-3-N-acetylglucosamine-beta-4-(phosphate-6-)mannose), a carbohydrate structure present in alpha-dystroglycan (DAG1), which is required for binding laminin G-like domain-containing extracellular proteins with high affinity. Shows activity toward other pentose phosphate sugars and mediates formation of CDP-ribulose or CDP-ribose using CTP and ribulose-5-phosphate or ribose-5-phosphate, respectively. Not Involved in dolichol production. In Homo sapiens (Human), this protein is D-ribitol-5-phosphate cytidylyltransferase.